The chain runs to 267 residues: Undecaprenyl-diphosphatase (267 aa).

8 consecutive transmembrane segments (helical) span residues 1–21, 39–59, 83–103, 111–131, 144–164, 189–209, 218–238, and 245–265; these read MSYF…FLPI, QGLA…VIYF, AKLA…GLLM, LRSA…LWWV, TGWK…IPGT, FLMS…KLVT, FLLT…HFFL, and GMTP…AFLL.

The protein belongs to the UppP family.

It localises to the cell inner membrane. The catalysed reaction is di-trans,octa-cis-undecaprenyl diphosphate + H2O = di-trans,octa-cis-undecaprenyl phosphate + phosphate + H(+). Functionally, catalyzes the dephosphorylation of undecaprenyl diphosphate (UPP). Confers resistance to bacitracin. This chain is Undecaprenyl-diphosphatase, found in Vibrio parahaemolyticus serotype O3:K6 (strain RIMD 2210633).